Here is a 1271-residue protein sequence, read N- to C-terminus: Probable WRKY transcription factor protein 1 (1271 aa).

Residues 1-12 (MGAQYSTELNKY) show a composition bias toward polar residues. Disordered regions lie at residues 1–138 (MGAQ…NSDR), 204–312 (NNNN…QQNG), and 370–515 (NNNN…RTNS). A coiled-coil region spans residues 9–71 (LNKYNNNNNN…NNNNNNNNNN (63 aa)). 4 stretches are compositionally biased toward low complexity: residues 13–103 (NNNN…NNNN), 116–135 (INNT…NNNN), 204–216 (NNNN…NENN), and 223–259 (SSTT…NNNN). The segment covering 260–274 (NEDDEDDYGDDDTIE) has biased composition (acidic residues). A compositionally biased stretch (polar residues) spans 297 to 312 (SNLNDTNGGNSPQQNG). Residues 320–372 (KKLLALQQKQLEQEQEQKQQQKQQQQQQQQQQQQQQQQQQQQQKDAIENINNN) are a coiled coil. The span at 370–388 (NNNNNNKLQPIVKNSVNKT) shows a compositional bias: low complexity. Over residues 413–442 (NEDEYDASDEYIDDDDDDDEKYDDDDDEYF) the composition is skewed to acidic residues. Residues 443–458 (EGNNNNNYKKNNISNK) are compositionally biased toward low complexity. Over residues 475–487 (EIFKQKKLNHDKN) the composition is skewed to basic and acidic residues. A compositionally biased stretch (polar residues) spans 488-515 (QSNPKQQLTSHSEFDNSLLNKNQSRTNS). A coiled-coil region spans residues 520-574 (LQIKEENYHQIQQEHGEKQQQQQQQQQQPQQQQQQQQQQQQQQQQEMQVDKEQTE). Basic and acidic residues predominate over residues 578–587 (NTNKKEEQKP). 2 disordered regions span residues 578-650 (NTNK…EGFL) and 667-811 (SKKS…NISN). The span at 610–642 (NNENNNNNNNNNNNNNNNNNNNNNNNNNNYRNN) shows a compositional bias: low complexity. Positions 672-702 (NVVPTSPKSNLSDQQPPFSPVQISPQKQSPA) are enriched in polar residues. Composition is skewed to low complexity over residues 703-715 (TTTT…TPTP), 725-766 (NNNI…NNIN), and 774-811 (NSTQ…NISN). A coiled-coil region spans residues 766–786 (NNEEDEENNSTQNNNNNNNNN). The segment at residues 808-872 (NISNIVSDGY…YKGEHCHGFP (65 aa)) is a DNA-binding region (WRKY 1). Zn(2+) contacts are provided by cysteine 839, cysteine 844, histidine 867, and histidine 869. Residues 890–1095 (FEGLDGNNNN…RFNGTSESKG (206 aa)) form a disordered region. Low complexity predominate over residues 895 to 918 (GNNNNNNNNNNNNNNYSSNSNSNG). The span at 919–937 (NGNGNGNGNGNGNGNGNGN) shows a compositional bias: gly residues. Over residues 938-956 (SNGNQDQNGNSFNDQNGDS) the composition is skewed to low complexity. The segment covering 957–966 (PTQHGQISPM) has biased composition (polar residues). Residues 967–995 (NSPKNTIPTTTTTTTSISTYVNTNSTNKK) show a composition bias toward low complexity. Basic and acidic residues predominate over residues 998–1010 (SKQEKKISVKNET). Residues 1011-1021 (TDDDEFQEDID) show a composition bias toward acidic residues. Positions 1013-1040 (DDEFQEDIDQLSNNNNNNNNNNNNNNNN) form a coiled coil. The span at 1025-1085 (NNNNNNNNNN…NNNNNNNNNN (61 aa)) shows a compositional bias: low complexity. A DNA-binding region (WRKY 2) is located at residues 1105 to 1167 (SSIDHLDDGF…YRGKHNHDPP (63 aa)). The Zn(2+) site is built by cysteine 1136, cysteine 1141, histidine 1162, and histidine 1164. A disordered region spans residues 1180–1210 (NGLYNNNNNNNNNNNNNNNNNNNNNNINNIN). The segment covering 1184 to 1210 (NNNNNNNNNNNNNNNNNNNNNNINNIN) has biased composition (low complexity).

This sequence belongs to the WRKY group I family.

Its subcellular location is the nucleus. Functionally, probable transcription factor. Interacts specifically with the W box (5'-(T)TGAC[CT]-3'), a frequently occurring elicitor-responsive cis-acting element. In Dictyostelium discoideum (Social amoeba), this protein is Probable WRKY transcription factor protein 1 (wrky1).